Here is a 780-residue protein sequence, read N- to C-terminus: Zinc finger protein GLIS3 (780 aa).

Composition is skewed to polar residues over residues 80–92 (PSLS…QNGT) and 106–115 (VSGNSVSNSL). 2 disordered regions span residues 80-148 (PSLS…KKRA) and 290-315 (PSAL…HLHH). Residues 135–148 (SATRAHSTRSKKRA) show a composition bias toward basic residues. Positions 293-308 (LPLPLPPPQGPPPPYH) are enriched in pro residues. Residues 345–370 (HCCRWIDCSALYDQQEELVRHIEKVH) form a C2H2-type 1 zinc finger. The C2H2-type 2; atypical zinc finger occupies 379 to 406 (FTCFWTGCPRRYKPFNARYKLLIHMRVH). 3 C2H2-type zinc fingers span residues 412 to 436 (NKCT…LRSH), 442 to 466 (YLCQ…QRTH), and 472 to 496 (YACQ…VKAH). 2 disordered regions span residues 485–512 (DPSS…SSTE) and 527–670 (LQPA…QPNG). The Bipartite nuclear localization signal motif lies at 490–506 (RKHVKAHSSREQQARKK). Residues 497 to 512 (SSREQQARKKLRSSTE) show a composition bias toward basic and acidic residues. Residues 567-577 (HSTRSGTAAGA) are compositionally biased toward low complexity. Over residues 593–605 (VQGSPHNPSSQLP) the composition is skewed to polar residues.

This sequence belongs to the GLI C2H2-type zinc-finger protein family. As to expression, in the embryo, expressed at high levels in the kidney and testis. In the adult, expressed at high levels in the kidney and uterus and at lower levels in the brain, lung, skeletal muscle and pancreas.

It is found in the nucleus. Its function is as follows. Acts both as a repressor and activator of transcription. Binds to the consensus sequence 5'-GACCACCCAC-3'. The protein is Zinc finger protein GLIS3 of Mus musculus (Mouse).